The sequence spans 213 residues: Large ribosomal subunit protein uL3 (213 aa).

The residue at position 151 (glutamine 151) is an N5-methylglutamine.

This sequence belongs to the universal ribosomal protein uL3 family. In terms of assembly, part of the 50S ribosomal subunit. Forms a cluster with proteins L14 and L19. In terms of processing, methylated by PrmB.

Its function is as follows. One of the primary rRNA binding proteins, it binds directly near the 3'-end of the 23S rRNA, where it nucleates assembly of the 50S subunit. The sequence is that of Large ribosomal subunit protein uL3 from Rhizobium johnstonii (strain DSM 114642 / LMG 32736 / 3841) (Rhizobium leguminosarum bv. viciae).